We begin with the raw amino-acid sequence, 520 residues long: GMP synthase [glutamine-hydrolyzing] (520 aa).

The region spanning 9–202 is the Glutamine amidotransferase type-1 domain; the sequence is SVLIIDFGSQ…VHNIAGITGD (194 aa). Cys86 functions as the Nucleophile in the catalytic mechanism. Active-site residues include His176 and Glu178. In terms of domain architecture, GMPS ATP-PPase spans 203–395; sequence WSMSAYRAKA…LGLPDSFIGR (193 aa). 230–236 contributes to the ATP binding site; the sequence is SGGVDSS.

Homodimer.

It carries out the reaction XMP + L-glutamine + ATP + H2O = GMP + L-glutamate + AMP + diphosphate + 2 H(+). The protein operates within purine metabolism; GMP biosynthesis; GMP from XMP (L-Gln route): step 1/1. Its function is as follows. Catalyzes the synthesis of GMP from XMP. In Allorhizobium ampelinum (strain ATCC BAA-846 / DSM 112012 / S4) (Agrobacterium vitis (strain S4)), this protein is GMP synthase [glutamine-hydrolyzing].